Here is an 86-residue protein sequence, read N- to C-terminus: Thioredoxin (86 aa).

Active-site nucleophile residues include Cys-15 and Cys-18. Cys-15 and Cys-18 are oxidised to a cystine.

The protein belongs to the glutaredoxin family.

Functionally, does not function as a glutathione-disulfide oxidoreductase in the presence of glutathione and glutathione reductase. Has low thioredoxin activity in vitro. The chain is Thioredoxin from Methanocaldococcus jannaschii (strain ATCC 43067 / DSM 2661 / JAL-1 / JCM 10045 / NBRC 100440) (Methanococcus jannaschii).